A 429-amino-acid chain; its full sequence is D-amino acid dehydrogenase (429 aa).

FAD is bound at residue 3–17; that stretch reads VLILGSGVIGTTTAW.

Belongs to the DadA oxidoreductase family. It depends on FAD as a cofactor.

It catalyses the reaction a D-alpha-amino acid + A + H2O = a 2-oxocarboxylate + AH2 + NH4(+). It functions in the pathway amino-acid degradation; D-alanine degradation; NH(3) and pyruvate from D-alanine: step 1/1. Oxidative deamination of D-amino acids. The protein is D-amino acid dehydrogenase of Xanthomonas campestris pv. campestris (strain 8004).